Reading from the N-terminus, the 648-residue chain is Macrolide export ATP-binding/permease protein MacB (648 aa).

The 239-residue stretch at 5 to 243 (LELKDIRRSY…TGGTEPVVNT (239 aa)) folds into the ABC transporter domain. Position 41–48 (41–48 (GASGSGKS)) interacts with ATP. A run of 4 helical transmembrane segments spans residues 273-293 (LLTM…VVVG), 523-543 (LFLT…VMNI), 576-596 (AVLV…LIAF), and 611-631 (PLAL…FGWL).

It belongs to the ABC transporter superfamily. Macrolide exporter (TC 3.A.1.122) family. As to quaternary structure, homodimer. Part of the tripartite efflux system MacAB-TolC, which is composed of an inner membrane transporter, MacB, a periplasmic membrane fusion protein, MacA, and an outer membrane component, TolC. The complex forms a large protein conduit and can translocate molecules across both the inner and outer membranes. Interacts with MacA.

The protein resides in the cell inner membrane. In terms of biological role, part of the tripartite efflux system MacAB-TolC. MacB is a non-canonical ABC transporter that contains transmembrane domains (TMD), which form a pore in the inner membrane, and an ATP-binding domain (NBD), which is responsible for energy generation. Confers resistance against macrolides. The protein is Macrolide export ATP-binding/permease protein MacB of Escherichia coli (strain UTI89 / UPEC).